The following is a 147-amino-acid chain: uncharacterized protein (147 aa).

This is an uncharacterized protein from Escherichia coli (strain K12).